The primary structure comprises 619 residues: Dihydroxy-acid dehydratase (619 aa).

Position 80 (Asp-80) interacts with Mg(2+). Cys-121 contacts [2Fe-2S] cluster. Mg(2+)-binding residues include Asp-122 and Lys-123. Lys-123 carries the post-translational modification N6-carboxylysine. Cys-196 contacts [2Fe-2S] cluster. Glu-492 serves as a coordination point for Mg(2+). The active-site Proton acceptor is the Ser-518.

The protein belongs to the IlvD/Edd family. As to quaternary structure, homodimer. [2Fe-2S] cluster serves as cofactor. It depends on Mg(2+) as a cofactor.

It catalyses the reaction (2R)-2,3-dihydroxy-3-methylbutanoate = 3-methyl-2-oxobutanoate + H2O. The enzyme catalyses (2R,3R)-2,3-dihydroxy-3-methylpentanoate = (S)-3-methyl-2-oxopentanoate + H2O. Its pathway is amino-acid biosynthesis; L-isoleucine biosynthesis; L-isoleucine from 2-oxobutanoate: step 3/4. It functions in the pathway amino-acid biosynthesis; L-valine biosynthesis; L-valine from pyruvate: step 3/4. In terms of biological role, functions in the biosynthesis of branched-chain amino acids. Catalyzes the dehydration of (2R,3R)-2,3-dihydroxy-3-methylpentanoate (2,3-dihydroxy-3-methylvalerate) into 2-oxo-3-methylpentanoate (2-oxo-3-methylvalerate) and of (2R)-2,3-dihydroxy-3-methylbutanoate (2,3-dihydroxyisovalerate) into 2-oxo-3-methylbutanoate (2-oxoisovalerate), the penultimate precursor to L-isoleucine and L-valine, respectively. This chain is Dihydroxy-acid dehydratase, found in Bifidobacterium adolescentis (strain ATCC 15703 / DSM 20083 / NCTC 11814 / E194a).